Reading from the N-terminus, the 216-residue chain is Imidazole glycerol phosphate synthase subunit HisH (216 aa).

Positions 2 to 216 (RVAIIDYGSG…LISNFLRWKP (215 aa)) constitute a Glutamine amidotransferase type-1 domain. The active-site Nucleophile is Cys88. Residues His196 and Glu198 contribute to the active site.

As to quaternary structure, heterodimer of HisH and HisF.

It localises to the cytoplasm. The enzyme catalyses 5-[(5-phospho-1-deoxy-D-ribulos-1-ylimino)methylamino]-1-(5-phospho-beta-D-ribosyl)imidazole-4-carboxamide + L-glutamine = D-erythro-1-(imidazol-4-yl)glycerol 3-phosphate + 5-amino-1-(5-phospho-beta-D-ribosyl)imidazole-4-carboxamide + L-glutamate + H(+). It carries out the reaction L-glutamine + H2O = L-glutamate + NH4(+). Its pathway is amino-acid biosynthesis; L-histidine biosynthesis; L-histidine from 5-phospho-alpha-D-ribose 1-diphosphate: step 5/9. IGPS catalyzes the conversion of PRFAR and glutamine to IGP, AICAR and glutamate. The HisH subunit catalyzes the hydrolysis of glutamine to glutamate and ammonia as part of the synthesis of IGP and AICAR. The resulting ammonia molecule is channeled to the active site of HisF. The protein is Imidazole glycerol phosphate synthase subunit HisH of Agrobacterium fabrum (strain C58 / ATCC 33970) (Agrobacterium tumefaciens (strain C58)).